The following is a 406-amino-acid chain: Tyrosine-specific transport system 2 (406 aa).

The next 11 membrane-spanning stretches (helical) occupy residues 7 to 27 (FGSALIIAGTTIGAGMLAMPL), 38 to 58 (LLLLVGLWALLVYSGLLFVEV), 83 to 103 (IFATLSLLVLLYALSAAYITG), 119 to 139 (AMSLKTAIIIFTVVLGSFVVV), 150 to 170 (VLFIGKLIAFAFVLFMMLPKV), 183 to 203 (AFVVSAAPIFLTSFGFHVIMA), 219 to 239 (AILIGTAIPLAAYLVWQLATH), 279 to 299 (VFSSLALITSFLGVMLGVFEG), 314 to 334 (FVLTIAAFLPPLVFALFYPEG), 335 to 355 (FITALSYAGLLCAFYCLILPI), and 376 to 396 (NFALVLALLIGVVIMLIPFLI).

The protein belongs to the amino acid/polyamine transporter 2 family. Mtr/TnaB/TyrP permease subfamily.

The protein localises to the cell inner membrane. The catalysed reaction is L-tyrosine(in) + H(+)(in) = L-tyrosine(out) + H(+)(out). Transports tyrosine across the cytoplasmic membrane. The transport system is energized by the proton motive force. The sequence is that of Tyrosine-specific transport system 2 (tyrP-B) from Haemophilus influenzae (strain ATCC 51907 / DSM 11121 / KW20 / Rd).